The sequence spans 892 residues: Chromodomain-helicase-DNA-binding protein 3 (892 aa).

The segment covering 1 to 20 has biased composition (basic and acidic residues); sequence MSSKRGADPDWKTPGKASKD. The segment at 1-29 is disordered; sequence MSSKRGADPDWKTPGKASKDKRPKTNAKK. A PHD-type zinc finger spans residues 35–82; sequence EEYCKVCSDGGDLLCCDSCPSVYHRTCLSPPLKSIPKGDWICPRCIPL. 2 consecutive Chromo domains span residues 84-156 and 179-240; these read GKAE…PSLE and LLVQ…GRQR. In terms of domain architecture, Helicase ATP-binding spans 279–458; it reads RYSWGQGIPT…FHLLNFLSSG (180 aa). ATP is bound at residue 292-299; it reads DEMGLGKT. The DEAH box motif lies at 409–412; that stretch reads DEAH. The region spanning 590-739 is the Helicase C-terminal domain; sequence LLSKMLKQLK…LTHLVVRPGM (150 aa). The tract at residues 839-892 is disordered; that stretch reads SQPKLPKKQKKQSQQSQVDVESIMGKGKRIRKEIDYSNQYPSPNRATPSSIVLM. The span at 874-892 shows a compositional bias: polar residues; that stretch reads YSNQYPSPNRATPSSIVLM.

This sequence belongs to the SNF2/RAD54 helicase family. Monomer.

It is found in the nucleus. It localises to the chromosome. It carries out the reaction ATP + H2O = ADP + phosphate + H(+). ATPase activity is stimulated by binding to DNA or nucleosomes, but is strongly activated by nucleosomes. Functionally, ATP-dependent chromatin-remodeling factor which acts in nucleosome-remodeling by catalyzing ATP-dependent nucleosome mobilization. Likely to be involved in the regulation of transcription. The protein is Chromodomain-helicase-DNA-binding protein 3 of Drosophila melanogaster (Fruit fly).